The sequence spans 881 residues: DNA replication helicase (881 aa).

90-97 provides a ligand contact to ATP; the sequence is GNAGSGKS.

This sequence belongs to the herpesviridae helicase family. In terms of assembly, associates with the primase and the primase-associated factor to form the helicase-primase complex.

It localises to the host nucleus. Functionally, component of the helicase/primase complex. Unwinds the DNA at the replication forks and generates single-stranded DNA for both leading and lagging strand synthesis. The primase synthesizes short RNA primers on the lagging strand that the polymerase elongates using dNTPs. Possesses helicase-like motifs and therefore may act as the helicase subunit of the complex. The chain is DNA replication helicase from Homo sapiens (Human).